A 239-amino-acid chain; its full sequence is Proteasome subunit beta type-6 (239 aa).

Ala2 is modified (N-acetylalanine). The propeptide at 2–34 (AATLVAARGTRPAPAWGPEAIAPDWENREVSTG) is removed in mature form. Thr35 functions as the Nucleophile in the catalytic mechanism. Thr69 is modified (phosphothreonine).

The protein belongs to the peptidase T1B family. As to quaternary structure, the 26S proteasome consists of a 20S proteasome core and two 19S regulatory subunits. The 20S proteasome core is a barrel-shaped complex made of 28 subunits that are arranged in four stacked rings. The two outer rings are each formed by seven alpha subunits, and the two inner rings are formed by seven beta subunits. The proteolytic activity is exerted by three beta-subunits PSMB5, PSMB6 and PSMB7.

Its subcellular location is the cytoplasm. The protein localises to the nucleus. It catalyses the reaction Cleavage of peptide bonds with very broad specificity.. Component of the 20S core proteasome complex involved in the proteolytic degradation of most intracellular proteins. This complex plays numerous essential roles within the cell by associating with different regulatory particles. Associated with two 19S regulatory particles, forms the 26S proteasome and thus participates in the ATP-dependent degradation of ubiquitinated proteins. The 26S proteasome plays a key role in the maintenance of protein homeostasis by removing misfolded or damaged proteins that could impair cellular functions, and by removing proteins whose functions are no longer required. Associated with the PA200 or PA28, the 20S proteasome mediates ubiquitin-independent protein degradation. This type of proteolysis is required in several pathways including spermatogenesis (20S-PA200 complex) or generation of a subset of MHC class I-presented antigenic peptides (20S-PA28 complex). Within the 20S core complex, PSMB6 displays a peptidylglutamyl-hydrolyzing activity also termed postacidic or caspase-like activity, meaning that the peptides bond hydrolysis occurs directly after acidic residues. This Bos taurus (Bovine) protein is Proteasome subunit beta type-6 (PSMB6).